A 179-amino-acid chain; its full sequence is Low molecular weight phosphotyrosine protein phosphatase (179 aa).

Catalysis depends on cysteine 15, which acts as the Nucleophile. Arginine 21 is an active-site residue. Aspartate 148 functions as the Proton donor in the catalytic mechanism.

The protein belongs to the low molecular weight phosphotyrosine protein phosphatase family.

The protein localises to the cytoplasm. It carries out the reaction O-phospho-L-tyrosyl-[protein] + H2O = L-tyrosyl-[protein] + phosphate. The catalysed reaction is a phosphate monoester + H2O = an alcohol + phosphate. Functionally, acts on tyrosine phosphorylated proteins, low-MW aryl phosphates and natural and synthetic acyl phosphates. The sequence is that of Low molecular weight phosphotyrosine protein phosphatase (acp1) from Dictyostelium discoideum (Social amoeba).